We begin with the raw amino-acid sequence, 81 residues long: Photosystem I iron-sulfur center (81 aa).

4Fe-4S ferredoxin-type domains follow at residues 2-31 (SHSV…MVSW) and 39-68 (IASA…VRVY). Positions 11, 14, 17, 21, 48, 51, 54, and 58 each coordinate [4Fe-4S] cluster.

The eukaryotic PSI reaction center is composed of at least 11 subunits. Requires [4Fe-4S] cluster as cofactor.

Its subcellular location is the plastid. It localises to the chloroplast thylakoid membrane. The enzyme catalyses reduced [plastocyanin] + hnu + oxidized [2Fe-2S]-[ferredoxin] = oxidized [plastocyanin] + reduced [2Fe-2S]-[ferredoxin]. In terms of biological role, apoprotein for the two 4Fe-4S centers FA and FB of photosystem I (PSI); essential for photochemical activity. FB is the terminal electron acceptor of PSI, donating electrons to ferredoxin. The C-terminus interacts with PsaA/B/D and helps assemble the protein into the PSI complex. Required for binding of PsaD and PsaE to PSI. PSI is a plastocyanin/cytochrome c6-ferredoxin oxidoreductase, converting photonic excitation into a charge separation, which transfers an electron from the donor P700 chlorophyll pair to the spectroscopically characterized acceptors A0, A1, FX, FA and FB in turn. This Rhodomonas salina (Cryptomonas salina) protein is Photosystem I iron-sulfur center.